The chain runs to 771 residues: Probable cation-transporting ATPase G (771 aa).

In terms of domain architecture, HMA spans 19-86; it reads GRMRVQATGF…AIIDAETVPA (68 aa). A helical transmembrane segment spans residues 72 to 92; it reads AAILSAIIDAETVPAAAVPAY. The tract at residues 122–143 is disordered; the sequence is DVAAQPSGETSDACCDGEDNED. A run of 5 helical transmembrane segments spans residues 163–183, 209–229, 330–350, 387–407, and 411–431; these read VLLTASLVAAWAYPLWPVVLG, VGVGTLMTIAALGAVALGELG, VFAGSINGLGVLQVGVTATAA, MIAAALIAGTGSVLGNPLVWI, and LVVLVAAAPCALAIAVPVTVV. The 4-aspartylphosphate intermediate role is filled by Asp462. Mg(2+)-binding residues include Asp651 and Asp655. Helical transmembrane passes span 657-677 and 716-736; these read PALAAADLGIAMGAMGTDVAI and IITVLMPLALFGILGLAAVVL.

Belongs to the cation transport ATPase (P-type) (TC 3.A.3) family. Type IB subfamily.

It localises to the cell membrane. The catalysed reaction is ATP + H2O = ADP + phosphate + H(+). This Mycobacterium bovis (strain ATCC BAA-935 / AF2122/97) protein is Probable cation-transporting ATPase G (ctpG).